The primary structure comprises 452 residues: Trigger factor (452 aa).

A PPIase FKBP-type domain is found at 170–255 (GDRVTIDFTG…VKSVAAPGPL (86 aa)).

The protein belongs to the FKBP-type PPIase family. Tig subfamily.

It is found in the cytoplasm. It carries out the reaction [protein]-peptidylproline (omega=180) = [protein]-peptidylproline (omega=0). Its function is as follows. Involved in protein export. Acts as a chaperone by maintaining the newly synthesized protein in an open conformation. Functions as a peptidyl-prolyl cis-trans isomerase. The chain is Trigger factor from Xanthobacter autotrophicus (strain ATCC BAA-1158 / Py2).